The primary structure comprises 308 residues: Porphobilinogen deaminase (308 aa).

Cys241 carries the post-translational modification S-(dipyrrolylmethanemethyl)cysteine.

This sequence belongs to the HMBS family. As to quaternary structure, monomer. Dipyrromethane is required as a cofactor.

It catalyses the reaction 4 porphobilinogen + H2O = hydroxymethylbilane + 4 NH4(+). It functions in the pathway porphyrin-containing compound metabolism; protoporphyrin-IX biosynthesis; coproporphyrinogen-III from 5-aminolevulinate: step 2/4. Tetrapolymerization of the monopyrrole PBG into the hydroxymethylbilane pre-uroporphyrinogen in several discrete steps. The chain is Porphobilinogen deaminase from Staphylococcus aureus (strain bovine RF122 / ET3-1).